The following is a 438-amino-acid chain: Methylenetetrahydrofolate--tRNA-(uracil-5-)-methyltransferase TrmFO (438 aa).

9 to 14 (GGGLAG) provides a ligand contact to FAD.

It belongs to the MnmG family. TrmFO subfamily. FAD serves as cofactor.

Its subcellular location is the cytoplasm. The catalysed reaction is uridine(54) in tRNA + (6R)-5,10-methylene-5,6,7,8-tetrahydrofolate + NADH + H(+) = 5-methyluridine(54) in tRNA + (6S)-5,6,7,8-tetrahydrofolate + NAD(+). It carries out the reaction uridine(54) in tRNA + (6R)-5,10-methylene-5,6,7,8-tetrahydrofolate + NADPH + H(+) = 5-methyluridine(54) in tRNA + (6S)-5,6,7,8-tetrahydrofolate + NADP(+). Its function is as follows. Catalyzes the folate-dependent formation of 5-methyl-uridine at position 54 (M-5-U54) in all tRNAs. The protein is Methylenetetrahydrofolate--tRNA-(uracil-5-)-methyltransferase TrmFO of Lactobacillus gasseri (strain ATCC 33323 / DSM 20243 / BCRC 14619 / CIP 102991 / JCM 1131 / KCTC 3163 / NCIMB 11718 / NCTC 13722 / AM63).